Here is an 80-residue protein sequence, read N- to C-terminus: U1-nemetoxin-Csp1a (80 aa).

Residues 1–20 form the signal peptide; that stretch reads MKYFVVFCVLIIAVAAFTSA. Residues 21–41 constitute a propeptide that is removed on maturation; that stretch reads AEDGEVFEENPLEFPKTIQKR. Disulfide bonds link Cys42-Cys56, Cys49-Cys60, Cys55-Cys77, and Cys66-Cys73.

It belongs to the neurotoxin 13 (insecticidal toxin ABC) family. 02 (Calisoga) subfamily. Expressed by the venom gland.

Its subcellular location is the secreted. Functionally, causes paralysis to insect larvae (H.virescens). This toxin is active only on insects. This Calisoga sp. (Spider) protein is U1-nemetoxin-Csp1a.